Here is a 353-residue protein sequence, read N- to C-terminus: Photosystem II protein D1 (353 aa).

T2 is subject to N-acetylthreonine. Phosphothreonine is present on T2. The next 3 membrane-spanning stretches (helical) occupy residues 29–46 (YIGW…TATS), 118–133 (HFLL…EWEL), and 142–156 (WIAV…AAAA). H118 serves as a coordination point for chlorophyll a. Y126 is a pheophytin a binding site. [CaMn4O5] cluster contacts are provided by D170 and E189. Residues 197 to 218 (FHMLGVAGVFGGSLFSAMHGSL) traverse the membrane as a helical segment. H198 contacts chlorophyll a. Residues H215 and 264-265 (SF) each bind a quinone. H215 is a binding site for Fe cation. Fe cation is bound at residue H272. Residues 274-288 (FLAAWPVVGIWFTAL) form a helical membrane-spanning segment. H332, E333, D342, and A344 together coordinate [CaMn4O5] cluster. A propeptide spanning residues 345-353 (AVEAPSING) is cleaved from the precursor.

It belongs to the reaction center PufL/M/PsbA/D family. As to quaternary structure, PSII is composed of 1 copy each of membrane proteins PsbA, PsbB, PsbC, PsbD, PsbE, PsbF, PsbH, PsbI, PsbJ, PsbK, PsbL, PsbM, PsbT, PsbX, PsbY, PsbZ, Psb30/Ycf12, at least 3 peripheral proteins of the oxygen-evolving complex and a large number of cofactors. It forms dimeric complexes. It depends on The D1/D2 heterodimer binds P680, chlorophylls that are the primary electron donor of PSII, and subsequent electron acceptors. It shares a non-heme iron and each subunit binds pheophytin, quinone, additional chlorophylls, carotenoids and lipids. D1 provides most of the ligands for the Mn4-Ca-O5 cluster of the oxygen-evolving complex (OEC). There is also a Cl(-1) ion associated with D1 and D2, which is required for oxygen evolution. The PSII complex binds additional chlorophylls, carotenoids and specific lipids. as a cofactor. Post-translationally, tyr-161 forms a radical intermediate that is referred to as redox-active TyrZ, YZ or Y-Z. C-terminally processed by CTPA; processing is essential to allow assembly of the oxygen-evolving complex and thus photosynthetic growth.

It localises to the plastid. The protein localises to the chloroplast thylakoid membrane. It carries out the reaction 2 a plastoquinone + 4 hnu + 2 H2O = 2 a plastoquinol + O2. In terms of biological role, photosystem II (PSII) is a light-driven water:plastoquinone oxidoreductase that uses light energy to abstract electrons from H(2)O, generating O(2) and a proton gradient subsequently used for ATP formation. It consists of a core antenna complex that captures photons, and an electron transfer chain that converts photonic excitation into a charge separation. The D1/D2 (PsbA/PsbD) reaction center heterodimer binds P680, the primary electron donor of PSII as well as several subsequent electron acceptors. The sequence is that of Photosystem II protein D1 from Vitis vinifera (Grape).